We begin with the raw amino-acid sequence, 428 residues long: Large envelope protein (428 aa).

The N-myristoyl glycine; by host moiety is linked to residue glycine 2. A pre-S1 region spans residues 2 to 145; that stretch reads GNNIKVTFDP…PPLRDTHPHL (144 aa). A pre-S region spans residues 2 to 204; the sequence is GNNIKVTFDP…PLTIGDPVLS (203 aa). Residues 2–211 are Virion surface; in external conformation-facing; sequence GNNIKVTFDP…VLSTEMSPSG (210 aa). Topologically, residues 2–283 are intravirion; in internal conformation; that stretch reads GNNIKVTFDP…NGFRWMYLRR (282 aa). Asparagine 3 carries N-linked (GlcNAc...) asparagine glycosylation. The interval 110–144 is disordered; that stretch reads RDIPRGIVPPQTPSNRDQRRKPTPLTPPLRDTHPH. Residues 146-204 form a pre-S2 region; it reads TMKNQTGHLQGFAEGLRALTTSDHHNSAYGDPFTTLSPVVPTVSTTLSPPLTIGDPVLS. The helical transmembrane segment at 212–232 threads the bilayer; that stretch reads LLGLLAGLQVVYFLWTKILTI. Over 233–283 the chain is Intravirion; in external conformation; it reads AQSLDWWWTSLSFPGGIPECTGQNLQFQTCKHLPTSCPPTCNGFRWMYLRR. A helical transmembrane segment spans residues 284-304; it reads FIIYLLVLLLFLTFLLVLLDW. Residues 305–376 lie on the Virion surface side of the membrane; sequence KGLLPVCPMM…WALARFSWLS (72 aa). Asparagine 348 is a glycosylation site (N-linked (GlcNAc...) asparagine; by host). A helical membrane pass occupies residues 377–397; sequence LLVPLLQWLGGISLTVWLLLI. Residues 398–403 are Intravirion-facing; sequence WMIWFW. A helical membrane pass occupies residues 404-426; that stretch reads GPVLMSILPPFIPIFALFFLIWA. Topologically, residues 427-428 are virion surface; sequence YI.

It belongs to the orthohepadnavirus major surface antigen family. As to quaternary structure, in its internal form (Li-HBsAg), interacts with the capsid protein and with the isoform S. Interacts with host chaperone CANX. Associates with host chaperone CANX through its pre-S2 N glycan; this association may be essential for isoform M proper secretion. In terms of assembly, interacts with isoform L. Interacts with the antigens of satellite virus HDV (HDVAgs); this interaction is required for encapsidation of HDV genomic RNA. Post-translationally, isoform M is N-terminally acetylated by host at a ratio of 90%, and N-glycosylated by host at the pre-S2 region. Myristoylated.

It localises to the virion membrane. Its function is as follows. The large envelope protein exists in two topological conformations, one which is termed 'external' or Le-HBsAg and the other 'internal' or Li-HBsAg. In its external conformation the protein attaches the virus to cell receptors and thereby initiating infection. This interaction determines the species specificity and liver tropism. This attachment induces virion internalization predominantly through caveolin-mediated endocytosis. The large envelope protein also assures fusion between virion membrane and endosomal membrane. In its internal conformation the protein plays a role in virion morphogenesis and mediates the contact with the nucleocapsid like a matrix protein. In terms of biological role, the middle envelope protein plays an important role in the budding of the virion. It is involved in the induction of budding in a nucleocapsid independent way. In this process the majority of envelope proteins bud to form subviral lipoprotein particles of 22 nm of diameter that do not contain a nucleocapsid. This Ground squirrel hepatitis virus (strain 27) (GSHV) protein is Large envelope protein.